The following is a 99-amino-acid chain: uncharacterized protein (99 aa).

This is an uncharacterized protein from Micromonospora olivasterospora.